A 179-amino-acid polypeptide reads, in one-letter code: Large ribosomal subunit protein uL5 (179 aa).

The protein belongs to the universal ribosomal protein uL5 family. As to quaternary structure, part of the 50S ribosomal subunit; part of the 5S rRNA/L5/L18/L25 subcomplex. Contacts the 5S rRNA and the P site tRNA. Forms a bridge to the 30S subunit in the 70S ribosome.

In terms of biological role, this is one of the proteins that bind and probably mediate the attachment of the 5S RNA into the large ribosomal subunit, where it forms part of the central protuberance. In the 70S ribosome it contacts protein S13 of the 30S subunit (bridge B1b), connecting the 2 subunits; this bridge is implicated in subunit movement. Contacts the P site tRNA; the 5S rRNA and some of its associated proteins might help stabilize positioning of ribosome-bound tRNAs. The chain is Large ribosomal subunit protein uL5 from Idiomarina loihiensis (strain ATCC BAA-735 / DSM 15497 / L2-TR).